Here is a 118-residue protein sequence, read N- to C-terminus: Large ribosomal subunit protein bL20 (118 aa).

This sequence belongs to the bacterial ribosomal protein bL20 family.

Functionally, binds directly to 23S ribosomal RNA and is necessary for the in vitro assembly process of the 50S ribosomal subunit. It is not involved in the protein synthesizing functions of that subunit. In Thermotoga petrophila (strain ATCC BAA-488 / DSM 13995 / JCM 10881 / RKU-1), this protein is Large ribosomal subunit protein bL20.